Reading from the N-terminus, the 331-residue chain is Aspartate carbamoyltransferase catalytic subunit (331 aa).

The carbamoyl phosphate site is built by Arg-76 and Thr-77. Lys-104 is a binding site for L-aspartate. The carbamoyl phosphate site is built by Arg-126, His-154, and Gln-157. Residues Arg-187 and Arg-246 each contribute to the L-aspartate site. Residues Gly-287 and Pro-288 each coordinate carbamoyl phosphate.

It belongs to the aspartate/ornithine carbamoyltransferase superfamily. ATCase family. As to quaternary structure, heterododecamer (2C3:3R2) of six catalytic PyrB chains organized as two trimers (C3), and six regulatory PyrI chains organized as three dimers (R2).

The catalysed reaction is carbamoyl phosphate + L-aspartate = N-carbamoyl-L-aspartate + phosphate + H(+). The protein operates within pyrimidine metabolism; UMP biosynthesis via de novo pathway; (S)-dihydroorotate from bicarbonate: step 2/3. Its function is as follows. Catalyzes the condensation of carbamoyl phosphate and aspartate to form carbamoyl aspartate and inorganic phosphate, the committed step in the de novo pyrimidine nucleotide biosynthesis pathway. The sequence is that of Aspartate carbamoyltransferase catalytic subunit from Dehalococcoides mccartyi (strain ATCC BAA-2100 / JCM 16839 / KCTC 5957 / BAV1).